The primary structure comprises 512 residues: Centrosomal protein CCDC61 (512 aa).

At Met-1 the chain carries N-acetylmethionine. A head domain region spans residues 1–142 (MEQPAGLQVD…PLPLPYQGKP (142 aa)). Coiled coils occupy residues 176 to 203 (WHLREQVTRLASEKRELEAQLGRSREEA) and 246 to 273 (RRLAKELEEVKASERNLRARLKTLNCEL). A Phosphothreonine modification is found at Thr-282. Disordered stretches follow at residues 282–415 (TLPA…SFRS) and 430–472 (SQSV…HLAS). Residues 287 to 300 (AREDRALSSRERST) are compositionally biased toward basic and acidic residues. A phosphoserine mark is found at Ser-328, Ser-330, Ser-372, and Ser-375. Residues 406–415 (RSSSVDSFRS) are compositionally biased toward low complexity. Residues Ser-447 and Ser-473 each carry the phosphoserine modification.

It belongs to the CCDC61 family. Forms homodimers (via head domain). Interacts with CEP170. Interacts with PCM1 and CEP131. Binds tubulin.

It is found in the cytoplasm. It localises to the cytoskeleton. The protein localises to the microtubule organizing center. Its subcellular location is the centrosome. The protein resides in the centriolar satellite. It is found in the cilium basal body. Microtubule-binding centrosomal protein required for centriole cohesion, independently of the centrosome-associated protein/CEP250 and rootletin/CROCC linker. In interphase, required for anchoring microtubule at the mother centriole subdistal appendages and for centrosome positioning. During mitosis, may be involved in spindle assembly and chromatin alignment by regulating the organization of spindle microtubules into a symmetrical structure. Plays a non-essential role in ciliogenesis. In Rattus norvegicus (Rat), this protein is Centrosomal protein CCDC61.